We begin with the raw amino-acid sequence, 239 residues long: MPLGHIMRLDLEKIALEYIVPCLHEVGFCYLDNFLGEVVGDCVLERVKQLHCTGALRDGQLAGPRAGVSKRHLRGDQITWIGGNEEGCEAISFLLSLIDRLVLYCGSRLGKYYVKERSKAMVACYPGNGTGYVRHVDNPNGDGRCITCIYYLNKNWDAKLHGGILRIFPEGKSFIADVEPIFDRLLFFWSDRRNPHEVQPSYATRYAMTVWYFDAEERAEAKKKFRNLTRKTESALTED.

The interval 62 to 73 is beta(2)beta(3) 'finger-like' loop; that stretch reads AGPRAGVSKRHL. Positions 88–104 are required for interaction with ADRB2; it reads CEAISFLLSLIDRLVLY. The Fe2OG dioxygenase domain maps to 116–214; it reads ERSKAMVACY…RYAMTVWYFD (99 aa). Residues H135, D137, and H196 each coordinate Fe cation. Position 205 (R205) interacts with 2-oxoglutarate.

In terms of assembly, interacts with BCL2 (via its BH4 domain); the interaction disrupts the BAX-BCL4 complex inhibiting the anti-apoptotic activity of BCL2. Interacts with WDR83; the interaction leads to almost complete elimination of HIF-mediated reporter activity. Interacts with ADRB2; the interaction hydroxylates ADRB2 facilitating its ubiquitination by the VHL-E3 ligase complex. Interacts with PAX2; the interaction targets PAX2 for destruction. Interacts with PKM; the interaction hydroxylates PKM in hypoxia. Interacts with LIMD1, WTIP and AJUBA. The cofactor is Fe(2+). L-ascorbate is required as a cofactor. Ubiquitinated by SIAH1 and/or SIAH2 in response to the unfolded protein response (UPR), leading to its degradation. Widely expressed at low levels. Expressed at higher levels in adult heart (cardiac myocytes, aortic endothelial cells and coronary artery smooth muscle), lung and placenta, and in fetal spleen, heart and skeletal muscle. Also expressed in pancreas. Localized to pancreatic acini and islet cells.

It localises to the nucleus. It is found in the cytoplasm. It carries out the reaction L-prolyl-[protein] + 2-oxoglutarate + O2 = trans-4-hydroxy-L-prolyl-[protein] + succinate + CO2. The catalysed reaction is L-prolyl-[hypoxia-inducible factor alpha subunit] + 2-oxoglutarate + O2 = trans-4-hydroxy-L-prolyl-[hypoxia-inducible factor alpha subunit] + succinate + CO2. Its activity is regulated as follows. Activated in cardiovascular cells and Hela cells following exposure to hypoxia. Inhibited by polynitrogen compounds probably by chelation to Fe(2+) ions. Functionally, prolyl hydroxylase that mediates hydroxylation of proline residues in target proteins, such as PKM, TELO2, ATF4 and HIF1A. Target proteins are preferentially recognized via a LXXLAP motif. Cellular oxygen sensor that catalyzes, under normoxic conditions, the post-translational formation of 4-hydroxyproline in hypoxia-inducible factor (HIF) alpha proteins. Hydroxylates a specific proline found in each of the oxygen-dependent degradation (ODD) domains (N-terminal, NODD, and C-terminal, CODD) of HIF1A. Also hydroxylates HIF2A. Has a preference for the CODD site for both HIF1A and HIF2A. Hydroxylation on the NODD site by EGLN3 appears to require prior hydroxylation on the CODD site. Hydroxylated HIFs are then targeted for proteasomal degradation via the von Hippel-Lindau ubiquitination complex. Under hypoxic conditions, the hydroxylation reaction is attenuated allowing HIFs to escape degradation resulting in their translocation to the nucleus, heterodimerization with HIF1B, and increased expression of hypoxy-inducible genes. ELGN3 is the most important isozyme in limiting physiological activation of HIFs (particularly HIF2A) in hypoxia. Also hydroxylates PKM in hypoxia, limiting glycolysis. Under normoxia, hydroxylates and regulates the stability of ADRB2. Regulator of cardiomyocyte and neuronal apoptosis. In cardiomyocytes, inhibits the anti-apoptotic effect of BCL2 by disrupting the BAX-BCL2 complex. In neurons, has a NGF-induced proapoptotic effect, probably through regulating CASP3 activity. Also essential for hypoxic regulation of neutrophilic inflammation. Plays a crucial role in DNA damage response (DDR) by hydroxylating TELO2, promoting its interaction with ATR which is required for activation of the ATR/CHK1/p53 pathway. Also mediates hydroxylation of ATF4, leading to decreased protein stability of ATF4. In Homo sapiens (Human), this protein is Prolyl hydroxylase EGLN3.